The sequence spans 1011 residues: CRM-domain containing factor CFM2, chloroplastic (1011 aa).

A chloroplast-targeting transit peptide spans 1–45 (MLLPLFHQQPLILAKTFPDRIFPPFLVPNTLVSRRNVSRANSGIF). Basic and acidic residues predominate over residues 77–90 (HDSPTRRITGEESG). Positions 77 to 96 (HDSPTRRITGEESGKNSPGE) are disordered. 3 CRM domains span residues 164–260 (LTLP…YFVS), 376–473 (PKLT…AVSS), and 577–677 (EGIT…QCLR). Disordered regions lie at residues 721 to 810 (DSAT…GNSL) and 841 to 872 (LNAN…DGLV). Polar residues predominate over residues 722–736 (SATNETWSDGESSNM). Residues 743 to 757 (ENQHTEPEKAREKIE) are compositionally biased toward basic and acidic residues. The span at 762–771 (SDLSVPSSGE) shows a compositional bias: polar residues. Positions 772-782 (ENWEDDSEGEV) are enriched in acidic residues. Polar residues predominate over residues 849–859 (GSSTGSGSQIS). Residues 873–972 (TDLSNRERLI…WGAEEEMKSF (100 aa)) form the CRM 4 domain.

As to quaternary structure, interacts with RNA. Part of large ribonucleo-protein particles that contain CAF1 and/or CAF2.

Its subcellular location is the plastid. It localises to the chloroplast stroma. Binds specific group II introns in chloroplasts and facilitates their splicing. Acts on both subgroup IIA and subgroup IIB introns. The substrates of the subgroup IIB also require the CRM domain proteins CAF1 or CAF2, with a simultaneous binding of CFM2 and CAF1 or CAF2. Can bind to and promote the splicing of the single group I intron in chloroplast tRNA transcript of trnL-UAA gene. The polypeptide is CRM-domain containing factor CFM2, chloroplastic (Arabidopsis thaliana (Mouse-ear cress)).